We begin with the raw amino-acid sequence, 400 residues long: Large envelope protein (400 aa).

N-acetylmethionine is present on M1. Residue G2 is the site of N-myristoyl glycine; by host attachment. Positions 2-119 are pre-S1; the sequence is GAPLSTTRRG…PPLRDTHPQA (118 aa). Positions 2–174 are pre-S; the sequence is GAPLSTTRRG…FSKTGGPAMN (173 aa). Residues 2–181 are Virion surface; in external conformation-facing; the sequence is GAPLSTTRRG…AMNMDNITSG (180 aa). Residues 2–253 lie on the Intravirion; in internal conformation side of the membrane; sequence GAPLSTTRRG…PGYRWMCLRR (252 aa). N-linked (GlcNAc...) asparagine glycosylation is present at P4. Positions 84–117 are disordered; it reads VLTTLPADPPPASTNRRSGRKPTPVSPPLRDTHP. Residues 120–174 are pre-S2; sequence MQWNSTQFHQALLDPRVRALYFPAGGSSSGTQNPAPTIASLTSSIFSKTGGPAMN. The chain crosses the membrane as a helical span at residues 182–202; the sequence is LLGPLLVLQAVCFLLTKILTI. Residues 203-253 are Intravirion; in external conformation-facing; the sequence is PQSLDSWWTSLNFLGGLPGCPGQNSQSPTSNHLPTSCPPTCPGYRWMCLRR. A helical membrane pass occupies residues 254–274; it reads FIIFLFILLLCLIFLLVLLDY. Topologically, residues 275 to 348 are virion surface; sequence QGMLPVCPLL…WASARFSWLS (74 aa). N320 carries N-linked (GlcNAc...) asparagine; by host glycosylation. Residues 349-369 traverse the membrane as a helical segment; that stretch reads LLVQFVQWCVGLSPTVWLLVI. Over 370–375 the chain is Intravirion; that stretch reads WMIWYW. A helical transmembrane segment spans residues 376-398; that stretch reads GPNLCSILSPFIPLLPIFCYLWV. Topologically, residues 399–400 are virion surface; the sequence is SI.

Belongs to the orthohepadnavirus major surface antigen family. In its internal form (Li-HBsAg), interacts with the capsid protein and with the isoform S. Interacts with host chaperone CANX. As to quaternary structure, associates with host chaperone CANX through its pre-S2 N glycan; this association may be essential for isoform M proper secretion. In terms of assembly, interacts with isoform L. Interacts with the antigens of satellite virus HDV (HDVAgs); this interaction is required for encapsidation of HDV genomic RNA. In terms of processing, isoform M is N-terminally acetylated by host at a ratio of 90%, and N-glycosylated by host at the pre-S2 region. Myristoylated.

The protein resides in the virion membrane. Its function is as follows. The large envelope protein exists in two topological conformations, one which is termed 'external' or Le-HBsAg and the other 'internal' or Li-HBsAg. In its external conformation the protein attaches the virus to cell receptors and thereby initiating infection. This interaction determines the species specificity and liver tropism. This attachment induces virion internalization predominantly through caveolin-mediated endocytosis. The large envelope protein also assures fusion between virion membrane and endosomal membrane. In its internal conformation the protein plays a role in virion morphogenesis and mediates the contact with the nucleocapsid like a matrix protein. Functionally, the middle envelope protein plays an important role in the budding of the virion. It is involved in the induction of budding in a nucleocapsid independent way. In this process the majority of envelope proteins bud to form subviral lipoprotein particles of 22 nm of diameter that do not contain a nucleocapsid. The chain is Large envelope protein from Hepatitis B virus genotype F2 (isolate Brazil/w4B) (HBV-F).